The chain runs to 680 residues: Methionine--tRNA ligase (680 aa).

The 'HIGH' region motif lies at 14-24 (PYANGPIHLGH). The Zn(2+) site is built by Cys145, Cys148, Cys158, and Cys161. The 'KMSKS' region signature appears at 330–334 (KMSKS). Lys333 provides a ligand contact to ATP. Residues 579–680 (DFAKVDFRIA…DGAQPGMRVK (102 aa)) enclose the tRNA-binding domain.

This sequence belongs to the class-I aminoacyl-tRNA synthetase family. MetG type 1 subfamily. In terms of assembly, homodimer. The cofactor is Zn(2+).

The protein localises to the cytoplasm. The enzyme catalyses tRNA(Met) + L-methionine + ATP = L-methionyl-tRNA(Met) + AMP + diphosphate. Its function is as follows. Is required not only for elongation of protein synthesis but also for the initiation of all mRNA translation through initiator tRNA(fMet) aminoacylation. The protein is Methionine--tRNA ligase of Hydrogenovibrio crunogenus (strain DSM 25203 / XCL-2) (Thiomicrospira crunogena).